Consider the following 720-residue polypeptide: Asp/Glu-specific dipeptidyl-peptidase (720 aa).

Positions 1-21 (MKKRLLLPLFAALCLSQIAHA) are cleaved as a signal peptide. The cysteines at positions 69 and 86 are disulfide-linked. Active-site charge relay system residues include His85, Asp227, and Ser655.

This sequence belongs to the peptidase S46 family. In terms of assembly, homodimer.

The protein resides in the cell surface. With respect to regulation, enzyme activity is completely blocked by diisopropyl-fluorophosphates, moderately by phenylmethylsulfonyl fluoride (PMSF) and 4-(2-methyl)benzenesulfonyl fluoride, and slightly by pepstatin in vitro. In terms of biological role, catalyzes the removal of dipeptides from the N-terminus of oligopeptides. Shows a strict specificity for acidic residues (Asp or Glu) in the P1 position, and has a hydrophobic residue preference at the P2 position. Preferentially cleaves the synthetic substrate Leu-Asp-methylcoumaryl-7-amide (Leu-Asp-MCA) as compared to Leu-Glu-MCA. Is involved in amino acid metabolism and bacterial growth of asaccharolytic P.gingivalis, that utilizes amino acids from extracellular proteinaceous nutrients as energy and carbon sources. The sequence is that of Asp/Glu-specific dipeptidyl-peptidase from Porphyromonas gingivalis (strain ATCC 33277 / DSM 20709 / CIP 103683 / JCM 12257 / NCTC 11834 / 2561).